We begin with the raw amino-acid sequence, 730 residues long: Multifunctional procollagen lysine hydroxylase and glycosyltransferase (730 aa).

Residues 1-16 (MRVLPFLLPLIPVLLA) form the signal peptide. The interval 20–280 (TDLPELVVVT…CGLEVKESEE (261 aa)) is required for glycosyltransferase activity. UDP-binding positions include 30-32 (VAT) and 98-100 (DAY). Mn(2+)-binding residues include Asp98, Asp101, and His242. 245-248 (GPSK) is a UDP binding site. A disulfide bridge connects residues Cys268 and Cys271. The accessory region stretch occupies residues 281–507 (VPLIALNLFI…YYGFLIVSDE (227 aa)). Cys554 and Cys690 are disulfide-bonded. 2-oxoglutarate is bound by residues Arg590 and Tyr648. Residues 639 to 730 (ESNMMFVVRY…RYIMVSFINP (92 aa)) form the Fe2OG dioxygenase domain. His659 and Asp661 together coordinate Fe cation. The segment at 664-707 (TFSIDIALNKKGRDYEGGGVRYIRYNCTVPADEVGYAMMFPGRL) is important for dimerization. Asn689 carries N-linked (GlcNAc...) asparagine glycosylation. His711 lines the Fe cation pocket. Position 721 (Arg721) interacts with 2-oxoglutarate.

In terms of assembly, homodimer. Fe(2+) is required as a cofactor. L-ascorbate serves as cofactor. Requires Mn(2+) as cofactor.

The protein localises to the rough endoplasmic reticulum. The protein resides in the endoplasmic reticulum lumen. It is found in the endoplasmic reticulum membrane. Its subcellular location is the secreted. It localises to the extracellular space. It catalyses the reaction L-lysyl-[collagen] + 2-oxoglutarate + O2 = (5R)-5-hydroxy-L-lysyl-[collagen] + succinate + CO2. It carries out the reaction (5R)-5-hydroxy-L-lysyl-[collagen] + UDP-alpha-D-galactose = (5R)-5-O-(beta-D-galactosyl)-5-hydroxy-L-lysyl-[collagen] + UDP + H(+). The enzyme catalyses (5R)-5-O-(beta-D-galactosyl)-5-hydroxy-L-lysyl-[collagen] + UDP-alpha-D-glucose = (5R)-5-O-[alpha-D-glucosyl-(1-&gt;2)-beta-D-galactosyl]-5-hydroxy-L-lysyl-[collagen] + UDP + H(+). Its function is as follows. Multifunctional enzyme that catalyzes a series of post-translational modifications on Lys residues in procollagen. Catalyzes the formation of hydroxylysine residues in -Xaa-Lys-Gly- sequences in type IV collagens. Transfers galactose onto hydroxylysine groups, giving rise to galactosyl 5-hydroxylysine. Catalyzes the subsequent transfer of glucose moieties, giving rise to 1,2-glucosylgalactosyl-5-hydroxylysine residues. Essential for normal biosynthesis and secretion of type IV collagens. Essential for normal stability of the basement membrane. The protein is Multifunctional procollagen lysine hydroxylase and glycosyltransferase (let-268) of Caenorhabditis elegans.